The chain runs to 288 residues: Energy-coupling factor transporter ATP-binding protein EcfA2 (288 aa).

One can recognise an ABC transporter domain in the interval 3–246 (IKLEQLGYCY…PDELVDLGLS (244 aa)). 40-47 (GHTGSGKS) provides a ligand contact to ATP.

This sequence belongs to the ABC transporter superfamily. Energy-coupling factor EcfA family. In terms of assembly, forms a stable energy-coupling factor (ECF) transporter complex composed of 2 membrane-embedded substrate-binding proteins (S component), 2 ATP-binding proteins (A component) and 2 transmembrane proteins (T component).

It is found in the cell membrane. ATP-binding (A) component of a common energy-coupling factor (ECF) ABC-transporter complex. Unlike classic ABC transporters this ECF transporter provides the energy necessary to transport a number of different substrates. This is Energy-coupling factor transporter ATP-binding protein EcfA2 from Listeria monocytogenes serovar 1/2a (strain ATCC BAA-679 / EGD-e).